Consider the following 483-residue polypeptide: FAD-linked oxidoreductase easE (483 aa).

One can recognise an FAD-binding PCMH-type domain in the interval 10–193 (QGRLPLYSAV…TEATVRVFSD (184 aa)).

It belongs to the oxygen-dependent FAD-linked oxidoreductase family. Requires FAD as cofactor.

It participates in alkaloid biosynthesis; ergot alkaloid biosynthesis. FAD-linked oxidoreductase; part of the gene cluster that mediates the biosynthesis of fungal ergot alkaloid. DmaW catalyzes the first step of ergot alkaloid biosynthesis by condensing dimethylallyl diphosphate (DMAP) and tryptophan to form 4-dimethylallyl-L-tryptophan. The second step is catalyzed by the methyltransferase easF that methylates 4-dimethylallyl-L-tryptophan in the presence of S-adenosyl-L-methionine, resulting in the formation of 4-dimethylallyl-L-abrine. The catalase easC and the FAD-dependent oxidoreductase easE then transform 4-dimethylallyl-L-abrine to chanoclavine-I which is further oxidized by easD in the presence of NAD(+), resulting in the formation of chanoclavine-I aldehyde. Agroclavine dehydrogenase easG then mediates the conversion of chanoclavine-I aldehyde to agroclavine via a non-enzymatic adduct reaction: the substrate is an iminium intermediate that is formed spontaneously from chanoclavine-I aldehyde in the presence of glutathione. The presence of easA is not required to complete this reaction. Further conversion of agroclavine to paspalic acid is a two-step process involving oxidation of agroclavine to elymoclavine and of elymoclavine to paspalic acid, the second step being performed by the elymoclavine oxidase cloA. Paspalic acid is then further converted to D-lysergic acid. Ergopeptines are assembled from D-lysergic acid and three different amino acids by the D-lysergyl-peptide-synthetases composed each of a monomudular and a trimodular nonribosomal peptide synthetase subunit. LpsB and lpsC encode the monomodular subunits responsible for D-lysergic acid activation and incorporation into the ergopeptine backbone. LpsA1 and A2 subunits encode the trimodular nonribosomal peptide synthetase assembling the tripeptide portion of ergopeptines. LpsA1 is responsible for formation of the major ergopeptine, ergotamine, and lpsA2 for alpha-ergocryptine, the minor ergopeptine of the total alkaloid mixture elaborated by C.purpurea. D-lysergyl-tripeptides are assembled by the nonribosomal peptide synthetases and released as N-(D-lysergyl-aminoacyl)-lactams. Cyclolization of the D-lysergyl-tripeptides is performed by the Fe(2+)/2-ketoglutarate-dependent dioxygenase easH which introduces a hydroxyl group into N-(D-lysergyl-aminoacyl)-lactam at alpha-C of the aminoacyl residue followed by spontaneous condensation with the terminal lactam carbonyl group. In Claviceps purpurea (Ergot fungus), this protein is FAD-linked oxidoreductase easE.